A 625-amino-acid chain; its full sequence is Phosphomethylpyrimidine synthase (625 aa).

Substrate is bound by residues N237, M266, Y295, H331, 351 to 353 (SRG), 392 to 395 (DGLR), and E431. H435 lines the Zn(2+) pocket. Y458 provides a ligand contact to substrate. H499 is a Zn(2+) binding site. Residues C579, C582, and C587 each coordinate [4Fe-4S] cluster.

Belongs to the ThiC family. As to quaternary structure, homodimer. The cofactor is [4Fe-4S] cluster.

The catalysed reaction is 5-amino-1-(5-phospho-beta-D-ribosyl)imidazole + S-adenosyl-L-methionine = 4-amino-2-methyl-5-(phosphooxymethyl)pyrimidine + CO + 5'-deoxyadenosine + formate + L-methionine + 3 H(+). It participates in cofactor biosynthesis; thiamine diphosphate biosynthesis. Catalyzes the synthesis of the hydroxymethylpyrimidine phosphate (HMP-P) moiety of thiamine from aminoimidazole ribotide (AIR) in a radical S-adenosyl-L-methionine (SAM)-dependent reaction. This Cupriavidus metallidurans (strain ATCC 43123 / DSM 2839 / NBRC 102507 / CH34) (Ralstonia metallidurans) protein is Phosphomethylpyrimidine synthase.